The following is a 68-amino-acid chain: Large ribosomal subunit protein uL29 (68 aa).

Belongs to the universal ribosomal protein uL29 family.

The sequence is that of Large ribosomal subunit protein uL29 from Erythrobacter litoralis (strain HTCC2594).